The sequence spans 207 residues: Uridine kinase (207 aa).

14–21 contacts ATP; that stretch reads GGSGSGKT.

This sequence belongs to the uridine kinase family.

The protein resides in the cytoplasm. The enzyme catalyses uridine + ATP = UMP + ADP + H(+). It carries out the reaction cytidine + ATP = CMP + ADP + H(+). It functions in the pathway pyrimidine metabolism; CTP biosynthesis via salvage pathway; CTP from cytidine: step 1/3. Its pathway is pyrimidine metabolism; UMP biosynthesis via salvage pathway; UMP from uridine: step 1/1. This Deinococcus deserti (strain DSM 17065 / CIP 109153 / LMG 22923 / VCD115) protein is Uridine kinase.